The primary structure comprises 490 residues: Protein dead ringer homolog (490 aa).

A compositionally biased stretch (basic and acidic residues) spans 1 to 33 (MVEDQRRQLMEEEDEERRLILEEQRRRMMRADR). Disordered stretches follow at residues 1 to 77 (MVED…AHID) and 106 to 135 (ITQS…HGGS). Over residues 34-50 (DEEEEEEEEEEEEEREE) the composition is skewed to acidic residues. A compositionally biased stretch (basic and acidic residues) spans 51–76 (DDGRRSEDEMREDEPPGRRETSHAHI). Polar residues predominate over residues 106-117 (ITQSPPLTNGSN). The ARID domain occupies 202 to 294 (DSKRKEFLDD…YLYPYECEKK (93 aa)). The segment at 298–369 (SPSELQSAID…PPRLSPSTSP (72 aa)) is disordered. The segment covering 316 to 325 (PSYHSPHMHP) has biased composition (basic residues). The region spanning 389 to 479 (AAMLAELAER…GVLYPRGGTR (91 aa)) is the REKLES domain.

The protein localises to the nucleus. Its function is as follows. Transcription factor involved in skeletogenesis and oral ectoderm patterning. This chain is Protein dead ringer homolog (dri), found in Strongylocentrotus purpuratus (Purple sea urchin).